The primary structure comprises 495 residues: Bile acid-sensitive ion channel (495 aa).

The tract at residues 1–30 is binds the plasma membrane and stabilizes the channel in the closed state; it reads MEHTEKSQVHAEKGLLGKIKRYLSKRPLPS. Residues 1–61 lie on the Cytoplasmic side of the membrane; the sequence is MEHTEKSQVH…NIAQNQNKVR (61 aa). The chain crosses the membrane as a helical span at residues 62–82; it reads KVIWLAVVLGSVSLLVWQIYS. Residues 83 to 459 lie on the Extracellular side of the membrane; it reads RLVNYFTWPT…GLFCGASLIT (377 aa). 6 disulfide bridges follow: cysteine 112-cysteine 207, cysteine 185-cysteine 192, cysteine 298-cysteine 377, cysteine 315-cysteine 373, cysteine 328-cysteine 350, and cysteine 330-cysteine 342. Asparagine 147, asparagine 163, and asparagine 179 each carry an N-linked (GlcNAc...) asparagine glycan. 3 N-linked (GlcNAc...) asparagine glycosylation sites follow: asparagine 370, asparagine 405, and asparagine 421. Residues 454–456 carry the GAS motif; ion selectivity filter motif; it reads GAS. A helical membrane pass occupies residues 460–480; that stretch reads IIEIIEYFFTNFYWVLIFFLL. The Cytoplasmic segment spans residues 481–495; it reads KILETIQRTSPPQAV.

The protein belongs to the amiloride-sensitive sodium channel (TC 1.A.6) family. ASIC5 subfamily. In terms of assembly, forms homotrimeric channels. As to expression, expressed by cholangiocytes (at protein level). Detected in cerebellum, brainstem, kidney, liver, hepatocytes, lung, intestine and embryo. In the cerebellum, restricted to interneurons in the granular layer, specifically in GRM1-expressing unipolar brush cells of the vestibulocerebellum.

It is found in the apical cell membrane. It localises to the cell membrane. It catalyses the reaction Na(+)(in) = Na(+)(out). The catalysed reaction is Li(+)(in) = Li(+)(out). It carries out the reaction K(+)(in) = K(+)(out). The enzyme catalyses H(+)(in) = H(+)(out). With respect to regulation, inhibited by the diuretic drug amiloride. Contrary to its rat ortholog it is not inhibited by Ca(2+). In terms of biological role, forms bile acid-gated sodium channels and may play a role in bile acid-dependent absorption and secretion by epithelial cells of the bile ducts. Displays high selectivity for sodium ions but can also permit the permeation of other cations. The gating could be indirect and the consequence of alterations of the membrane environment of the channel by bile acids. As a sodium channel of type II unipolar brush cells of the vestibulocerebellum, controlling the electrical activity of these cells, could play a role in motor coordination and balance. This Mus musculus (Mouse) protein is Bile acid-sensitive ion channel.